We begin with the raw amino-acid sequence, 214 residues long: Small ribosomal subunit protein uS3c (214 aa).

A KH type-2 domain is found at 39 to 111 (IRTYIHTISK…QLTINVLEVE (73 aa)).

This sequence belongs to the universal ribosomal protein uS3 family. In terms of assembly, part of the 30S ribosomal subunit.

Its subcellular location is the plastid. It is found in the chloroplast. The protein is Small ribosomal subunit protein uS3c (rps3) of Phaeodactylum tricornutum (strain CCAP 1055/1).